A 164-amino-acid polypeptide reads, in one-letter code: Putative 4-hydroxy-4-methyl-2-oxoglutarate aldolase (164 aa).

Residues 80–83 (GGNL) and Arg102 each bind substrate. Position 103 (Asp103) interacts with a divalent metal cation.

The protein belongs to the class II aldolase/RraA-like family. As to quaternary structure, homotrimer. The cofactor is a divalent metal cation.

The catalysed reaction is 4-hydroxy-4-methyl-2-oxoglutarate = 2 pyruvate. The enzyme catalyses oxaloacetate + H(+) = pyruvate + CO2. Functionally, catalyzes the aldol cleavage of 4-hydroxy-4-methyl-2-oxoglutarate (HMG) into 2 molecules of pyruvate. Also contains a secondary oxaloacetate (OAA) decarboxylase activity due to the common pyruvate enolate transition state formed following C-C bond cleavage in the retro-aldol and decarboxylation reactions. The protein is Putative 4-hydroxy-4-methyl-2-oxoglutarate aldolase of Burkholderia multivorans (strain ATCC 17616 / 249).